A 232-amino-acid chain; its full sequence is Ion-translocating oxidoreductase complex subunit E (232 aa).

Transmembrane regions (helical) follow at residues 12 to 31 (LWRNNSSLVQLLGLCPLLAV), 39 to 59 (LGLGLATTLVLVCTNTAVSAL), 69 to 89 (IPIYVMIIASVVSAVQMLINA), 92 to 112 (FGLYQSLGIFIPLIVTNCIVI), 125 to 145 (ALAALDGLSIGLGSTCTLLLL), and 182 to 202 (PFLLAMLPPGAFIGLGFMLVG).

Belongs to the NqrDE/RnfAE family. In terms of assembly, the complex is composed of six subunits: RnfA, RnfB, RnfC, RnfD, RnfE and RnfG.

Its subcellular location is the cell inner membrane. Its function is as follows. Part of a membrane-bound complex that couples electron transfer with translocation of ions across the membrane. This is Ion-translocating oxidoreductase complex subunit E from Sodalis glossinidius (strain morsitans).